The chain runs to 1174 residues: Carboxylic acid reductase (1174 aa).

AMP contacts are provided by residues H297, S392, 413-414 (EG), T418, D491, 503-506 (YLDR), K512, and K612. A Carrier domain is found at 651–726 (APVLVTVCRA…ALADYVEAAR (76 aa)). S685 bears the O-(pantetheine 4'-phosphoryl)serine mark. Residues 787–791 (TGFLG), R814, R824, 854–855 (DK), 880–882 (PAA), 919–920 (TS), Y956, and K960 each bind NADP(+).

It belongs to the ATP-dependent AMP-binding enzyme family. Carboxylic acid reductase subfamily. The cofactor is pantetheine 4'-phosphate.

The enzyme catalyses a carboxylate + ATP + NADPH + H(+) = an aldehyde + AMP + diphosphate + NADP(+). In terms of biological role, catalyzes the ATP- and NADPH-dependent reduction of carboxylic acids to the corresponding aldehydes. Catalyzes the reduction of a wide range of aliphatic fatty acids (C6-C18) into their corresponding aldehydes. Can also reduce benzoate to benzaldehyde. Has a preference for NADPH over NADH as the electron donor. The protein is Carboxylic acid reductase of Mycobacterium marinum (strain ATCC BAA-535 / M).